Consider the following 126-residue polypeptide: Glycine cleavage system H protein (126 aa).

A Lipoyl-binding domain is found at 22-104 (TVTIGVTDFA…YGEGWMIKIK (83 aa)). An N6-lipoyllysine modification is found at Lys-63.

This sequence belongs to the GcvH family. The glycine cleavage system is composed of four proteins: P, T, L and H. (R)-lipoate is required as a cofactor.

Its function is as follows. The glycine cleavage system catalyzes the degradation of glycine. The H protein shuttles the methylamine group of glycine from the P protein to the T protein. This Christiangramia forsetii (strain DSM 17595 / CGMCC 1.15422 / KT0803) (Gramella forsetii) protein is Glycine cleavage system H protein.